Here is a 467-residue protein sequence, read N- to C-terminus: Zinc finger and BTB domain-containing protein 43 (467 aa).

M1 is modified (N-acetylmethionine). In terms of domain architecture, BTB spans 33-97 (CDVSIVVQGH…SYTGRLVMPA (65 aa)). Disordered stretches follow at residues 134 to 153 (LNHG…GLVE) and 162 to 227 (HTDF…EFHY). Residues 140–149 (HQSPSSSNYN) are compositionally biased toward polar residues. Basic and acidic residues-rich tracts occupy residues 164-174 (DFPKAQELRDG) and 182-194 (KDEL…EHEY). Residues K182, K247, K297, and K358 each participate in a glycyl lysine isopeptide (Lys-Gly) (interchain with G-Cter in SUMO2) cross-link. The C2H2-type 1; atypical zinc-finger motif lies at 373 to 394 (YPCQCGKSFTHKSQRDRHMSMH). The segment at 400–422 (YGCSVCGKKFKMKHHLVGHMKIH) adopts a C2H2-type 2 zinc-finger fold. T423 is subject to Phosphothreonine. A C2H2-type 3; atypical zinc finger spans residues 428 to 450 (YECNICAKRFMWRDSFHRHVTSC). K458 is covalently cross-linked (Glycyl lysine isopeptide (Lys-Gly) (interchain with G-Cter in SUMO2)).

This sequence belongs to the krueppel C2H2-type zinc-finger protein family. In terms of assembly, interacts with BDP1.

The protein localises to the nucleus. Its function is as follows. May be involved in transcriptional regulation. The protein is Zinc finger and BTB domain-containing protein 43 (Zbtb43) of Mus musculus (Mouse).